Here is a 291-residue protein sequence, read N- to C-terminus: Tyramine--L-glutamate ligase (291 aa).

The ATP-grasp domain maps to Lys104–Asn274. Lys131–Ser176 is an ATP binding site. Positions 236, 247, and 249 each coordinate Mg(2+). Residues Asp236, Glu247, and Asn249 each contribute to the Mn(2+) site.

Requires Mg(2+) as cofactor. Mn(2+) serves as cofactor.

The enzyme catalyses tyramine + L-glutamate + ATP = gamma-L-glutamyltyramine + ADP + phosphate + H(+). The protein operates within cofactor biosynthesis; methanofuran biosynthesis. Functionally, catalyzes the formation of an amide bond between tyramine and the gamma carboxy group of L-glutamate. The enzyme also accepts phenylethylamine in vitro. The protein is Tyramine--L-glutamate ligase of Methanocaldococcus fervens (strain DSM 4213 / JCM 15782 / AG86) (Methanococcus fervens).